Consider the following 428-residue polypeptide: Enolase (428 aa).

Gln163 contacts (2R)-2-phosphoglycerate. The active-site Proton donor is Glu205. Mg(2+) contacts are provided by Asp242, Glu285, and Asp312. (2R)-2-phosphoglycerate is bound by residues Lys337, Arg366, Ser367, and Lys388. The Proton acceptor role is filled by Lys337.

The protein belongs to the enolase family. Mg(2+) is required as a cofactor.

It localises to the cytoplasm. Its subcellular location is the secreted. The protein resides in the cell surface. The enzyme catalyses (2R)-2-phosphoglycerate = phosphoenolpyruvate + H2O. The protein operates within carbohydrate degradation; glycolysis; pyruvate from D-glyceraldehyde 3-phosphate: step 4/5. In terms of biological role, catalyzes the reversible conversion of 2-phosphoglycerate (2-PG) into phosphoenolpyruvate (PEP). It is essential for the degradation of carbohydrates via glycolysis. This is Enolase from Brevibacillus brevis (strain 47 / JCM 6285 / NBRC 100599).